Consider the following 159-residue polypeptide: Cell division protein SepF (159 aa).

The tract at residues 23–69 (DYIEEDEEQKPASKSAFDSDHTVTPLASTTAPAASSTTKPFPGGRVN) is disordered. The segment covering 44–64 (TVTPLASTTAPAASSTTKPFP) has biased composition (low complexity).

It belongs to the SepF family. In terms of assembly, homodimer. Interacts with FtsZ.

The protein localises to the cytoplasm. Cell division protein that is part of the divisome complex and is recruited early to the Z-ring. Probably stimulates Z-ring formation, perhaps through the cross-linking of FtsZ protofilaments. Its function overlaps with FtsA. The protein is Cell division protein SepF of Bifidobacterium longum (strain DJO10A).